A 500-amino-acid polypeptide reads, in one-letter code: Beta-glucosidase 28 (500 aa).

The N-terminal stretch at 1-24 (MDRRLLLSALLFIALACSSNRVHG) is a signal peptide. An a beta-D-glucoside-binding site is contributed by Q45. N-linked (GlcNAc...) asparagine glycosylation occurs at N111. A beta-D-glucoside is bound by residues H146 and 191 to 192 (NE). The active-site Proton donor is the E192. Cysteines 211 and 219 form a disulfide. Residue Y337 participates in a beta-D-glucoside binding. Residue N362 is glycosylated (N-linked (GlcNAc...) asparagine). E408 is an a beta-D-glucoside binding site. E408 serves as the catalytic Nucleophile. N409, N415, and N416 each carry an N-linked (GlcNAc...) asparagine glycan. Residues W457, 464 to 465 (EF), and F473 contribute to the a beta-D-glucoside site.

The protein belongs to the glycosyl hydrolase 1 family.

It catalyses the reaction Hydrolysis of terminal, non-reducing beta-D-glucosyl residues with release of beta-D-glucose.. In Oryza sativa subsp. japonica (Rice), this protein is Beta-glucosidase 28 (BGLU28).